The chain runs to 187 residues: Elongation factor P (187 aa).

Belongs to the elongation factor P family.

It is found in the cytoplasm. Its pathway is protein biosynthesis; polypeptide chain elongation. Functionally, involved in peptide bond synthesis. Stimulates efficient translation and peptide-bond synthesis on native or reconstituted 70S ribosomes in vitro. Probably functions indirectly by altering the affinity of the ribosome for aminoacyl-tRNA, thus increasing their reactivity as acceptors for peptidyl transferase. This chain is Elongation factor P, found in Thermodesulfovibrio yellowstonii (strain ATCC 51303 / DSM 11347 / YP87).